Consider the following 247-residue polypeptide: ATP synthase subunit a, chloroplastic (247 aa).

The next 5 helical transmembrane spans lie at 38–58, 95–115, 134–154, 199–219, and 220–240; these read QVLITSWVVIAILLISTILVV, VPFIGTLFLFIFVSNWSGALL, INTTVALALLTSVAYFYAGIS, LVVVVLVSLVPLVIPIPVMFL, and GLFTSGIQALIFATLAAAYIG.

Belongs to the ATPase A chain family. As to quaternary structure, F-type ATPases have 2 components, CF(1) - the catalytic core - and CF(0) - the membrane proton channel. CF(1) has five subunits: alpha(3), beta(3), gamma(1), delta(1), epsilon(1). CF(0) has four main subunits: a, b, b' and c.

The protein localises to the plastid. Its subcellular location is the chloroplast thylakoid membrane. Key component of the proton channel; it plays a direct role in the translocation of protons across the membrane. The chain is ATP synthase subunit a, chloroplastic from Cicer arietinum (Chickpea).